Here is a 509-residue protein sequence, read N- to C-terminus: Phosphoglycerate kinase, glycosomal (509 aa).

Positions 32, 33, 34, 35, 48, 70, 71, 73, 74, 224, 260, and 261 each coordinate (2R)-3-phosphoglycerate. Gly-306 is an ADP binding site. Gly-306 is a CDP binding site. Lys-308 lines the (2R)-3-phosphoglycerate pocket. An AMP-binding site is contributed by Lys-308. CDP is bound at residue Asp-311. A Mg(2+)-binding site is contributed by Asp-311. Lys-312 and Gly-330 together coordinate ADP. Residue Lys-312 participates in AMP binding. Lys-312 lines the ATP pocket. Gly-330 provides a ligand contact to CDP. AMP is bound by residues Ala-331 and Ala-403. Ala-331 and Ala-403 together coordinate ATP. 2 residues coordinate ADP: Ala-403 and Asn-427. Residues Gly-428 and Phe-433 each coordinate CDP. Positions 433, 434, 466, and 467 each coordinate ADP. Position 434 (Glu-434) interacts with AMP. Residues Glu-434, Asp-466, and Ser-467 each coordinate ATP. Residue Asp-466 participates in Mg(2+) binding.

Belongs to the phosphoglycerate kinase family. As to quaternary structure, monomer. Mg(2+) serves as cofactor.

It localises to the glycosome. It carries out the reaction (2R)-3-phosphoglycerate + ATP = (2R)-3-phospho-glyceroyl phosphate + ADP. It participates in carbohydrate degradation; glycolysis; pyruvate from D-glyceraldehyde 3-phosphate: step 2/5. This is Phosphoglycerate kinase, glycosomal (56PGK) from Trypanosoma congolense.